We begin with the raw amino-acid sequence, 548 residues long: ATP synthase subunit alpha (548 aa).

Gly-172–Thr-179 provides a ligand contact to ATP.

The protein belongs to the ATPase alpha/beta chains family. F-type ATPases have 2 components, CF(1) - the catalytic core - and CF(0) - the membrane proton channel. CF(1) has five subunits: alpha(3), beta(3), gamma(1), delta(1), epsilon(1). CF(0) has three main subunits: a(1), b(2) and c(9-12). The alpha and beta chains form an alternating ring which encloses part of the gamma chain. CF(1) is attached to CF(0) by a central stalk formed by the gamma and epsilon chains, while a peripheral stalk is formed by the delta and b chains.

Its subcellular location is the cell membrane. The enzyme catalyses ATP + H2O + 4 H(+)(in) = ADP + phosphate + 5 H(+)(out). In terms of biological role, produces ATP from ADP in the presence of a proton gradient across the membrane. The alpha chain is a regulatory subunit. The chain is ATP synthase subunit alpha from Mycolicibacterium smegmatis (strain ATCC 700084 / mc(2)155) (Mycobacterium smegmatis).